A 487-amino-acid polypeptide reads, in one-letter code: GlcNAc-binding protein A (487 aa).

The N-terminal stretch at 1 to 29 is a signal peptide; the sequence is MKKLPNKSLIALALLSVSGASFGHGYVSA. Residues 30-201 enclose the Chitin-binding type-4 domain; it reads YENGVAEGRA…SFYNVIDVKF (172 aa). The 42-residue stretch at 438–479 folds into the Chitin-binding type-3 domain; the sequence is AGTKVLASDGAVYQCKEFPFSGYCTQWSPSATQFEPGKGSHW.

The protein belongs to the GbpA family.

The protein resides in the secreted. In terms of biological role, probably interacts with GlcNAc residues. May promote attachment to both epithelial cell surfaces and chitin. The polypeptide is GlcNAc-binding protein A (Vibrio campbellii (strain ATCC BAA-1116)).